Consider the following 459-residue polypeptide: Smoothelin-like protein 1 (459 aa).

The segment covering 1 to 27 (MEQTEGNSSEDGTTVSPTAGNLETPGS) has biased composition (polar residues). A disordered region spans residues 1 to 314 (MEQTEGNSSE…RPRGPRAQNR (314 aa)). 5 stretches are compositionally biased toward basic and acidic residues: residues 42-55 (SDKE…EHLC), 75-105 (DELK…KEDT), 112-168 (DTGK…KEDA), 185-211 (ADVK…KELV), and 221-232 (EQGKENESEERA). The stretch at 124–154 (NEVREKEEAMLASEKQKVDEKETNLESKEKS) forms a coiled coil. The segment covering 260 to 283 (PESTGETSPSASESSPSEVPGSPT) has biased composition (low complexity). Over residues 287–300 (PSEKKKDRAPERRV) the composition is skewed to basic and acidic residues. The residue at position 301 (Ser-301) is a Phosphoserine; by PKA and PKG. The Calponin-homology (CH) domain maps to 343–449 (GGVKNMLLEW…YIQELYRSLV (107 aa)). Residues 441–459 (IQELYRSLVQKGLVKTKKK) are calmodulin-binding.

This sequence belongs to the smoothelin family. As to quaternary structure, interacts with PPP1R12A. In terms of processing, maximal phosphorylation of Ser-301 correlates with maximal relaxation of aorta in response to acetylcholine. In terms of tissue distribution, widely expressed, with highest expression in skeletal muscles (at protein level). Within striated muscles, significantly more expressed in soleus muscle compared with plantaris muscle or white vastus (at protein level). 30-40% lower expression in females than in males (at protein level). Expressed in type 2a fibers, but not detected in fast twitch type 2b muscle white vastus nor in oxidative type I/b heart muscle (at protein level). Expressed within myometrial cells of the uterus, as well as in the endometrial layer. In the aorta, confined to smooth muscle cells. Not detected in endothelial cells.

It localises to the cytoplasm. The protein resides in the myofibril. The protein localises to the sarcomere. Its subcellular location is the i band. It is found in the m line. It localises to the nucleus. Its function is as follows. Plays a role in the regulation of contractile properties of both striated and smooth muscles. When unphosphorylated, may inhibit myosin dephosphorylation. Phosphorylation at Ser-301 reduces this inhibitory activity. The chain is Smoothelin-like protein 1 (Smtnl1) from Mus musculus (Mouse).